The following is a 681-amino-acid chain: MFNKILIANRGEIACRVIKTARKMGISTVAIYSDADKQALHVQMADEAVHIGPPPANQSYIVIDKVMAAIRATGAQAVHPGYGFLSENSKFAEALEAEGVIFVGPPKGAIEAMGDKITSKKIAQEANVSTVPGYMGLIEDADEAVKISNQIGYPVMIKASAGGGGKGMRIAWNDQEAREGFQSSKNEAANSFGDDRIFIEKFVTQPRHIEIQVLCDSHGNGIYLGERECSIQRRNQKVVEEAPSPFLDEATRRAMGEQAVALAKAVGYASAGTVEFIVDGQKNFYFLEMNTRLQVEHPVTELITGVDLVEQMIRVAAGEPLSITQGDVKLTGWAIENRLYAEDPYRGFLPSIGRLTRYRPPAETAAGPLLVNGKWQGDAPSGEAAVRNDTGVYEGGEISMYYDPMIAKLCTWAPTRAAAIEAMRIALDSFEVEGIGHNLPFLSAVMDHPKFISGDMTTAFIAEEYPEGFEGVNLPETDLRRVAAAAAAMHRVAEIRRTRVSGRMDNHERRVGTEWVVTLQGADFPVTIAADHDGSTVSFDDGSSMRVTSDWTPGDQLANLMVDGAPLVLKVGKISGGFRIRTRGADLKVHVRTPRQAELARLMPEKLPPDTSKMLLCPMPGLIVKVDVEVGQEVQEGQALCTIEAMKMENILRAEKKGVVAKINASAGNSLAVDDVIMEFE.

A Biotin carboxylation domain is found at Met1 to Pro466. ATP is bound by residues Lys116, Ser148 to Ile209, Glu200, and Asn235. The region spanning Lys120 to Ala317 is the ATP-grasp domain. Mg(2+) contacts are provided by Glu275, Glu288, and Asn290. Glu275, Glu288, and Asn290 together coordinate Mn(2+). Residue Glu288 is part of the active site. Residue Phe348 coordinates biotin. Residues Leu602 to Glu681 form the Biotinyl-binding domain. Lys647 is modified (N6-biotinyllysine).

As to quaternary structure, the holoenzyme is a dodecamer composed of 6 PccA/alpha subunits and 6 PccB/beta subunits. The cofactor is Mg(2+). Mn(2+) is required as a cofactor. Biotin serves as cofactor. The biotin cofactor is covalently attached to the C-terminal biotinyl-binding domain and is required for the catalytic activity.

The catalysed reaction is propanoyl-CoA + hydrogencarbonate + ATP = (S)-methylmalonyl-CoA + ADP + phosphate + H(+). The protein operates within metabolic intermediate metabolism; propanoyl-CoA degradation; succinyl-CoA from propanoyl-CoA: step 1/3. In terms of biological role, this is one of the 2 subunits of the biotin-dependent propionyl-CoA carboxylase (PCC), the enzyme catalyzing the carboxylation of propionyl-CoA/propanoyl-CoA to D-methylmalonyl-CoA/(S)-methylmalonyl-CoA. Within the holoenzyme, the alpha subunit catalyzes the ATP-dependent carboxylation of the biotin carried by the biotin carboxyl carrier (BCC) domain, while the beta subunit then tranfers the carboxyl group from carboxylated biotin to propionyl-CoA. This is Propionyl-CoA carboxylase alpha chain from Ruegeria pomeroyi (strain ATCC 700808 / DSM 15171 / DSS-3) (Silicibacter pomeroyi).